Consider the following 291-residue polypeptide: Nucleotide-binding protein PPA0813 (291 aa).

17–24 provides a ligand contact to ATP; sequence GISGAGRR. 66–69 is a GTP binding site; the sequence is DVRS.

This sequence belongs to the RapZ-like family.

Its function is as follows. Displays ATPase and GTPase activities. The sequence is that of Nucleotide-binding protein PPA0813 from Cutibacterium acnes (strain DSM 16379 / KPA171202) (Propionibacterium acnes).